The sequence spans 387 residues: Succinate--CoA ligase [ADP-forming] subunit beta (387 aa).

ATP-binding positions include Lys-46, 53–55 (GRG), Glu-99, Ala-102, and Glu-107. Residues Asn-199 and Asp-213 each contribute to the Mg(2+) site. Residues Asn-264 and 321-323 (GIV) each bind substrate.

It belongs to the succinate/malate CoA ligase beta subunit family. Heterotetramer of two alpha and two beta subunits. Mg(2+) is required as a cofactor.

It catalyses the reaction succinate + ATP + CoA = succinyl-CoA + ADP + phosphate. It carries out the reaction GTP + succinate + CoA = succinyl-CoA + GDP + phosphate. It participates in carbohydrate metabolism; tricarboxylic acid cycle; succinate from succinyl-CoA (ligase route): step 1/1. In terms of biological role, succinyl-CoA synthetase functions in the citric acid cycle (TCA), coupling the hydrolysis of succinyl-CoA to the synthesis of either ATP or GTP and thus represents the only step of substrate-level phosphorylation in the TCA. The beta subunit provides nucleotide specificity of the enzyme and binds the substrate succinate, while the binding sites for coenzyme A and phosphate are found in the alpha subunit. This is Succinate--CoA ligase [ADP-forming] subunit beta from Campylobacter jejuni subsp. jejuni serotype O:23/36 (strain 81-176).